Reading from the N-terminus, the 198-residue chain is Fucoxanthin-chlorophyll a-c binding protein B, chloroplastic (198 aa).

The N-terminal 31 residues, 1 to 31 (MKFTVFASLFASAAAFAPAQQAARTSVATNM), are a transit peptide targeting the chloroplast. Transmembrane regions (helical) follow at residues 73 to 94 (ISML…GGDI), 114 to 134 (IPQA…TSVM), and 174 to 196 (GRAA…NILP).

It belongs to the fucoxanthin chlorophyll protein family. The LHC complex of chromophytic algae is composed of fucoxanthin, chlorophyll A and C bound non-covalently by fucoxanthin chlorophyll proteins (FCPs). The ratio of the pigments in LHC; fucoxanthin: chlorophyll C: chlorophyll A; (0.6-1): (0.1-0.3): (1).

The protein resides in the plastid. The protein localises to the chloroplast thylakoid membrane. Functionally, the light-harvesting complex (LHC) functions as a light receptor, it captures and delivers excitation energy to photosystems with which it is closely associated. Energy is transferred from the carotenoid and chlorophyll C (or B) to chlorophyll A and the photosynthetic reaction centers where it is used to synthesize ATP and reducing power. This Phaeodactylum tricornutum (Diatom) protein is Fucoxanthin-chlorophyll a-c binding protein B, chloroplastic (FCPB).